The following is a 140-amino-acid chain: Ribosome-binding factor A (140 aa).

Positions 121-140 are disordered; it reads KTEQTSADDDADRLDSEDRS.

Belongs to the RbfA family. As to quaternary structure, monomer. Binds 30S ribosomal subunits, but not 50S ribosomal subunits or 70S ribosomes.

The protein localises to the cytoplasm. One of several proteins that assist in the late maturation steps of the functional core of the 30S ribosomal subunit. Associates with free 30S ribosomal subunits (but not with 30S subunits that are part of 70S ribosomes or polysomes). Required for efficient processing of 16S rRNA. May interact with the 5'-terminal helix region of 16S rRNA. The polypeptide is Ribosome-binding factor A (Psychrobacter sp. (strain PRwf-1)).